A 210-amino-acid chain; its full sequence is Orotate phosphoribosyltransferase (210 aa).

Residues Arg94, Lys98, His100, and Glu120–Ser128 contribute to the 5-phospho-alpha-D-ribose 1-diphosphate site. Ser124 contacts orotate.

This sequence belongs to the purine/pyrimidine phosphoribosyltransferase family. PyrE subfamily. In terms of assembly, homodimer. It depends on Mg(2+) as a cofactor.

The enzyme catalyses orotidine 5'-phosphate + diphosphate = orotate + 5-phospho-alpha-D-ribose 1-diphosphate. It participates in pyrimidine metabolism; UMP biosynthesis via de novo pathway; UMP from orotate: step 1/2. Functionally, catalyzes the transfer of a ribosyl phosphate group from 5-phosphoribose 1-diphosphate to orotate, leading to the formation of orotidine monophosphate (OMP). This is Orotate phosphoribosyltransferase from Bacillus anthracis (strain A0248).